Consider the following 130-residue polypeptide: Fluoride-specific ion channel FluC (130 aa).

Helical transmembrane passes span 3–23 (FVFL…YFVG), 38–58 (LGTF…GHLA), 67–87 (FGIF…SYGL), and 102–122 (VSYV…GWFL). Na(+) contacts are provided by glycine 77 and threonine 80.

The protein belongs to the fluoride channel Fluc/FEX (TC 1.A.43) family.

It is found in the cell inner membrane. It carries out the reaction fluoride(in) = fluoride(out). Its activity is regulated as follows. Na(+) is not transported, but it plays an essential structural role and its presence is essential for fluoride channel function. In terms of biological role, fluoride-specific ion channel. Important for reducing fluoride concentration in the cell, thus reducing its toxicity. The chain is Fluoride-specific ion channel FluC from Helicobacter pylori (strain HPAG1).